A 196-amino-acid polypeptide reads, in one-letter code: 7-methyl-GTP pyrophosphatase (196 aa).

D72 (proton acceptor) is an active-site residue.

Belongs to the Maf family. YceF subfamily. The cofactor is a divalent metal cation.

The protein resides in the cytoplasm. The enzyme catalyses N(7)-methyl-GTP + H2O = N(7)-methyl-GMP + diphosphate + H(+). In terms of biological role, nucleoside triphosphate pyrophosphatase that hydrolyzes 7-methyl-GTP (m(7)GTP). May have a dual role in cell division arrest and in preventing the incorporation of modified nucleotides into cellular nucleic acids. The sequence is that of 7-methyl-GTP pyrophosphatase from Neisseria meningitidis serogroup B (strain ATCC BAA-335 / MC58).